A 269-amino-acid polypeptide reads, in one-letter code: Surfeit locus protein 4 (269 aa).

5 consecutive transmembrane segments (helical) span residues Phe64–Ile84, Tyr92–Trp112, Phe179–Phe199, Leu203–Trp223, and Thr242–Met262. A Di-lysine motif motif is present at residues Lys266–Trp269.

This sequence belongs to the SURF4 family.

It is found in the endoplasmic reticulum membrane. The protein localises to the endoplasmic reticulum-Golgi intermediate compartment membrane. The protein resides in the golgi apparatus membrane. Functionally, endoplasmic reticulum cargo receptor that mediates the export of lipoproteins by recruiting cargos into COPII vesicles to facilitate their secretion. Acts as a cargo receptor for lipoproteins bearing both APOB and APOA1, thereby regulating lipoprotein delivery and the maintenance of lipid homeostasis. This is Surfeit locus protein 4 from Takifugu rubripes (Japanese pufferfish).